The sequence spans 325 residues: tRNA N6-adenosine threonylcarbamoyltransferase (325 aa).

Residues histidine 111 and histidine 115 each coordinate Fe cation. Substrate-binding positions include 134–138, aspartate 167, glycine 180, and asparagine 277; that span reads LISGG. Aspartate 305 contacts Fe cation.

This sequence belongs to the KAE1 / TsaD family. It depends on Fe(2+) as a cofactor.

The protein localises to the cytoplasm. It localises to the secreted. The catalysed reaction is L-threonylcarbamoyladenylate + adenosine(37) in tRNA = N(6)-L-threonylcarbamoyladenosine(37) in tRNA + AMP + H(+). Functionally, required for the formation of a threonylcarbamoyl group on adenosine at position 37 (t(6)A37) in tRNAs that read codons beginning with adenine. Is involved in the transfer of the threonylcarbamoyl moiety of threonylcarbamoyl-AMP (TC-AMP) to the N6 group of A37, together with TsaE and TsaB. TsaD likely plays a direct catalytic role in this reaction. The chain is tRNA N6-adenosine threonylcarbamoyltransferase from Mannheimia haemolytica (Pasteurella haemolytica).